The sequence spans 913 residues: Glutamate receptor ionotropic, kainate 2 (913 aa).

Over 1 to 566 the chain is Extracellular; the sequence is MCAGTMKIIS…VFSFLNPLSP (566 aa). Residues Asn-72, Asn-78, Asn-280, Asn-383, Asn-417, Asn-428, and Asn-435 are each glycosylated (N-linked (GlcNAc...) asparagine). The cysteines at positions 101 and 352 are disulfide-linked. Positions 521, 523, and 528 each coordinate L-glutamate. Asn-551 is a glycosylation site (N-linked (GlcNAc...) asparagine). Residues 567–587 form a helical membrane-spanning segment; the sequence is DIWMYILLAYLGVSCVLFVIA. Residues 588-643 lie on the Cytoplasmic side of the membrane; that stretch reads RFSPYEWYNPHPCNPDSDVVENNFTLLNSFWFGVGALMQQGSELMPKALSTRIVGG. Residues 644 to 664 traverse the membrane as a helical segment; that stretch reads IWWFFTLIIISSYTANLAAFL. The Extracellular segment spans residues 665–824; that stretch reads TVERMESPID…KEASALGVQN (160 aa). L-glutamate contacts are provided by Ala-694, Thr-695, and Glu-743. Residues Cys-755 and Cys-809 are joined by a disulfide bond. The N-linked (GlcNAc...) asparagine glycan is linked to Asn-756. A helical transmembrane segment spans residues 825–845; the sequence is IGGIFIVLAAGLVLSVFVAVG. The Cytoplasmic segment spans residues 846–913; sequence EFLYKSKKNA…RRLPGKETMA (68 aa).

The protein belongs to the glutamate-gated ion channel (TC 1.A.10.1) family. GRIK2 subfamily. In terms of assembly, homotetramer and heterotetramer with GRIK5. Tetramers may be formed by the dimerization of dimers.

The protein resides in the cell membrane. It localises to the postsynaptic cell membrane. The catalysed reaction is Ca(2+)(in) = Ca(2+)(out). The enzyme catalyses Na(+)(in) = Na(+)(out). Its activity is regulated as follows. Cold receptor activity activated by temperatures between 10-19 degrees Celsius. Its function is as follows. Ionotropic glutamate receptor that functions as a cation-permeable ligand-gated ion channel, gated by L-glutamate and the glutamatergic agonist kainic acid. L-glutamate acts as an excitatory neurotransmitter at many synapses in the central nervous system. Binding of the excitatory neurotransmitter L-glutamate induces a conformation change, leading to the opening of the cation channel, and thereby converts the chemical signal to an electrical impulse. The receptor then desensitizes rapidly and enters a transient inactive state, characterized by the presence of bound agonist. Functionally, independent of its ionotropic glutamate receptor activity, acts as a thermoreceptor conferring sensitivity to cold temperatures. Functions in dorsal root ganglion neurons. The sequence is that of Glutamate receptor ionotropic, kainate 2 (grik2) from Xenopus laevis (African clawed frog).